The chain runs to 266 residues: Energy-coupling factor transporter ATP-binding protein EcfA1 (266 aa).

Positions 2-237 (IKLNNVTFRY…EKIIEIAKIA (236 aa)) constitute an ABC transporter domain. 37-44 (GHNGSGKS) contacts ATP.

The protein belongs to the ABC transporter superfamily. Energy-coupling factor EcfA family. Forms a stable energy-coupling factor (ECF) transporter complex composed of 2 membrane-embedded substrate-binding proteins (S component), 2 ATP-binding proteins (A component) and 2 transmembrane proteins (T component).

It is found in the cell membrane. In terms of biological role, ATP-binding (A) component of a common energy-coupling factor (ECF) ABC-transporter complex. Unlike classic ABC transporters this ECF transporter provides the energy necessary to transport a number of different substrates. This is Energy-coupling factor transporter ATP-binding protein EcfA1 from Mycoplasmopsis synoviae (strain 53) (Mycoplasma synoviae).